The chain runs to 342 residues: Dihydroorotase (342 aa).

The Zn(2+) site is built by His-13 and His-15. Substrate-binding positions include 15 to 17 (HLR) and Asn-41. Residues Lys-98, His-135, and His-173 each coordinate Zn(2+). Residue Lys-98 is modified to N6-carboxylysine. Substrate is bound at residue His-135. Leu-218 contributes to the substrate binding site. Asp-246 provides a ligand contact to Zn(2+). Asp-246 is a catalytic residue. Positions 250 and 262 each coordinate substrate.

This sequence belongs to the metallo-dependent hydrolases superfamily. DHOase family. Class II DHOase subfamily. As to quaternary structure, homodimer. It depends on Zn(2+) as a cofactor.

The catalysed reaction is (S)-dihydroorotate + H2O = N-carbamoyl-L-aspartate + H(+). Its pathway is pyrimidine metabolism; UMP biosynthesis via de novo pathway; (S)-dihydroorotate from bicarbonate: step 3/3. In terms of biological role, catalyzes the reversible cyclization of carbamoyl aspartate to dihydroorotate. This is Dihydroorotase from Vibrio vulnificus (strain YJ016).